We begin with the raw amino-acid sequence, 466 residues long: Uronate isomerase (466 aa).

It belongs to the metallo-dependent hydrolases superfamily. Uronate isomerase family.

It carries out the reaction D-glucuronate = D-fructuronate. The catalysed reaction is aldehydo-D-galacturonate = keto-D-tagaturonate. Its pathway is carbohydrate metabolism; pentose and glucuronate interconversion. The protein is Uronate isomerase of Caldanaerobacter subterraneus subsp. tengcongensis (strain DSM 15242 / JCM 11007 / NBRC 100824 / MB4) (Thermoanaerobacter tengcongensis).